Consider the following 160-residue polypeptide: Ribonuclease P protein component 2 (160 aa).

The protein belongs to the eukaryotic/archaeal RNase P protein component 2 family. Consists of a catalytic RNA component and at least 4-5 protein subunits.

It is found in the cytoplasm. It catalyses the reaction Endonucleolytic cleavage of RNA, removing 5'-extranucleotides from tRNA precursor.. Functionally, part of ribonuclease P, a protein complex that generates mature tRNA molecules by cleaving their 5'-ends. In Methanosphaerula palustris (strain ATCC BAA-1556 / DSM 19958 / E1-9c), this protein is Ribonuclease P protein component 2.